We begin with the raw amino-acid sequence, 78 residues long: Large ribosomal subunit protein bL28 (78 aa).

A disordered region spans residues methionine 1–threonine 25.

It belongs to the bacterial ribosomal protein bL28 family.

The polypeptide is Large ribosomal subunit protein bL28 (Vibrio vulnificus (strain CMCP6)).